The sequence spans 421 residues: Membrane-associated protein UidC (421 aa).

Positions 1-23 (MRKIVAMAVICLTAASGLTSAYA) are cleaved as a signal peptide.

The protein belongs to the outer membrane porin (Opr) (TC 1.B.25) family.

It localises to the cell outer membrane. Enhances the activity of the UidB (GusB) glucuronide transporter, on its own however it has no transport activity. Glucuronide transport does not occur in strain K12 due to a variant at position 100 of the UidB (GusB, AC P0CE44, AC P0CE45) protein. The protein is Membrane-associated protein UidC (uidC) of Escherichia coli (strain K12).